A 240-amino-acid chain; its full sequence is UDP-2,3-diacylglucosamine hydrolase (240 aa).

The Mn(2+) site is built by Asp7, His9, Asp40, Asn78, and His113. 78 to 79 (NR) contributes to the substrate binding site. 5 residues coordinate substrate: Asp121, Ser159, Thr163, Lys166, and His194. Positions 194 and 196 each coordinate Mn(2+).

It belongs to the LpxH family. Mn(2+) is required as a cofactor.

The protein resides in the cell inner membrane. The catalysed reaction is UDP-2-N,3-O-bis[(3R)-3-hydroxytetradecanoyl]-alpha-D-glucosamine + H2O = 2-N,3-O-bis[(3R)-3-hydroxytetradecanoyl]-alpha-D-glucosaminyl 1-phosphate + UMP + 2 H(+). It participates in glycolipid biosynthesis; lipid IV(A) biosynthesis; lipid IV(A) from (3R)-3-hydroxytetradecanoyl-[acyl-carrier-protein] and UDP-N-acetyl-alpha-D-glucosamine: step 4/6. In terms of biological role, hydrolyzes the pyrophosphate bond of UDP-2,3-diacylglucosamine to yield 2,3-diacylglucosamine 1-phosphate (lipid X) and UMP by catalyzing the attack of water at the alpha-P atom. Involved in the biosynthesis of lipid A, a phosphorylated glycolipid that anchors the lipopolysaccharide to the outer membrane of the cell. In Stutzerimonas stutzeri (strain A1501) (Pseudomonas stutzeri), this protein is UDP-2,3-diacylglucosamine hydrolase.